Reading from the N-terminus, the 80-residue chain is Acyl carrier protein (80 aa).

In terms of domain architecture, Carrier spans 2 to 77 (SEINQKVVDI…QVVEYLEKRL (76 aa)). An O-(pantetheine 4'-phosphoryl)serine modification is found at S37.

This sequence belongs to the acyl carrier protein (ACP) family. In terms of processing, 4'-phosphopantetheine is transferred from CoA to a specific serine of apo-ACP by AcpS. This modification is essential for activity because fatty acids are bound in thioester linkage to the sulfhydryl of the prosthetic group.

Its subcellular location is the cytoplasm. Its pathway is lipid metabolism; fatty acid biosynthesis. Carrier of the growing fatty acid chain in fatty acid biosynthesis. The chain is Acyl carrier protein from Amoebophilus asiaticus (strain 5a2).